Here is a 447-residue protein sequence, read N- to C-terminus: Phosphoglucosamine mutase (447 aa).

Catalysis depends on serine 103, which acts as the Phosphoserine intermediate. 4 residues coordinate Mg(2+): serine 103, aspartate 242, aspartate 244, and aspartate 246. At serine 103 the chain carries Phosphoserine.

Belongs to the phosphohexose mutase family. Mg(2+) is required as a cofactor. Activated by phosphorylation.

It catalyses the reaction alpha-D-glucosamine 1-phosphate = D-glucosamine 6-phosphate. Catalyzes the conversion of glucosamine-6-phosphate to glucosamine-1-phosphate. This Paracoccus denitrificans (strain Pd 1222) protein is Phosphoglucosamine mutase.